Consider the following 224-residue polypeptide: EF-hand calcium-binding domain-containing protein 1 (224 aa).

An N-terminal signal peptide occupies residues 1-21; it reads MKVSLLLLALVLVCLVQGSES. The 36-residue stretch at 115–150 folds into the EF-hand domain; the sequence is IAHPDFMKAYSIADVDGDGELSPKEFYNGPYVFEMD. Residues Asp128, Asp130, Asp132, Glu134, and Glu139 each contribute to the Ca(2+) site.

Component of the acid-soluble organic matrix of calcified layers of the shell (at protein level).

It is found in the secreted. The protein is EF-hand calcium-binding domain-containing protein 1 of Lottia gigantea (Giant owl limpet).